The sequence spans 175 residues: Microfibril-associated glycoprotein 3 (175 aa).

Over 1-175 (FRTEGAEKLQ…KDGSFESCQL (175 aa)) the chain is Cytoplasmic. The disordered stretch occupies residues 85 to 175 (KERPALNAQD…KDGSFESCQL (91 aa)). Polar residues predominate over residues 145 to 175 (QDSSHFSPPDDTGSTESNSNYKDGSFESCQL).

In terms of processing, glycosylated.

It localises to the cell membrane. Functionally, component of the elastin-associated microfibrils. This Bos taurus (Bovine) protein is Microfibril-associated glycoprotein 3 (MFAP3).